Here is a 360-residue protein sequence, read N- to C-terminus: Membrane-bound lytic murein transglycosylase C (360 aa).

The N-terminal stretch at 1-16 (MKKLLALAVIAPLLIS) is a signal peptide. Residue cysteine 17 is the site of N-palmitoyl cysteine attachment. A lipid anchor (S-diacylglycerol cysteine) is attached at cysteine 17.

This sequence belongs to the transglycosylase Slt family.

Its subcellular location is the cell outer membrane. It catalyses the reaction Exolytic cleavage of the (1-&gt;4)-beta-glycosidic linkage between N-acetylmuramic acid (MurNAc) and N-acetylglucosamine (GlcNAc) residues in peptidoglycan, from either the reducing or the non-reducing ends of the peptidoglycan chains, with concomitant formation of a 1,6-anhydrobond in the MurNAc residue.. Its function is as follows. Murein-degrading enzyme. May play a role in recycling of muropeptides during cell elongation and/or cell division. The protein is Membrane-bound lytic murein transglycosylase C of Salmonella paratyphi A (strain ATCC 9150 / SARB42).